The chain runs to 711 residues: MNHDYHRLAERRHHAPHDVLGAHENGDGTTTIRTVQCGAESVAVRINGGEPVQMVPAEEYPALFTATVDYFVDTYNFEVTWAGGTAATLEDPYRRLPTVGDLDRYLIGEGRHEELWKVLGAHVVDGGVAFSVWAPHAAGVSVIGDFNGWNANQHPLRALGSSGIWELWIPSVSAGAHYKFSITTGDGVRLDKADPMARLAEPAPATASIVVADSDYAWGDDEWLAHRAAVGVDETMSIYEMHLGSWRKGRSYRELAVELVEYVQELGYTHVELMGVSEHPFEPSWGYQVTSYYAPNNRYGGPDDLRYLIDSLHRAGIGVIMDWVPGHFPKDGWALGRFDGEACYEHPDPRRGEQPDWGTYVFDFGRNEVRNFLVANALYWCKEFHIDGLRVDAVASMLYLDYSRDDWLPNQYGGRENLDAVEFLKEMNATVHRECPGSLTIAEESTSWPGVTAPTSEGGLGFSLKWNMGWMHDSLEYIQRDPAYRSYHHNEITFSMVYAYSENYVLPISHDEVVHGKGTLWSRMPAGSAWDKAAMVRSYLAFMWAHPGKKLLFQGQEWGQTEEWNESRGLDWHDLEGWEGEFHRGISALTSQLNKLYHSELALGQDHAPEGFQWIASDDSTNNVLSFIRRHRGRELACVINFSGTTQENYRIGLPQAGTWREVLNTDDVQYEGAGRVNGDLHTEPTGSHGMEASAVLQIPAHTARWFVLES.

Aspartate 392 serves as the catalytic Nucleophile. The active-site Proton donor is the glutamate 443.

This sequence belongs to the glycosyl hydrolase 13 family. GlgB subfamily. In terms of assembly, monomer.

It catalyses the reaction Transfers a segment of a (1-&gt;4)-alpha-D-glucan chain to a primary hydroxy group in a similar glucan chain.. It participates in glycan biosynthesis; glycogen biosynthesis. Its function is as follows. Catalyzes the formation of the alpha-1,6-glucosidic linkages in glycogen by scission of a 1,4-alpha-linked oligosaccharide from growing alpha-1,4-glucan chains and the subsequent attachment of the oligosaccharide to the alpha-1,6 position. The chain is 1,4-alpha-glucan branching enzyme GlgB from Corynebacterium jeikeium (strain K411).